The primary structure comprises 193 residues: Interferon type A1/A2 (193 aa).

An N-terminal signal peptide occupies residues 1-31 (MAVPASPQHPRGYGILLLTLLLKALATTASA). Disulfide bonds link C32–C129, C61–C155, and C68–C168. Residues N65, N71, N108, and N186 are each glycosylated (N-linked (GlcNAc...) asparagine).

Belongs to the alpha/beta interferon family.

The protein localises to the secreted. Functionally, has antiviral activities. The polypeptide is Interferon type A1/A2 (IFNA1) (Gallus gallus (Chicken)).